We begin with the raw amino-acid sequence, 367 residues long: 1-deoxy-D-xylulose 5-phosphate reductoisomerase (367 aa).

NADPH is bound by residues Thr10, Gly11, Ser12, Ile13, Gly34, Lys35, Asn36, and Asn112. 1-deoxy-D-xylulose 5-phosphate is bound at residue Lys113. An NADPH-binding site is contributed by Glu114. Asp138 serves as a coordination point for Mn(2+). 1-deoxy-D-xylulose 5-phosphate is bound by residues Ser139, Glu140, Ser164, and His186. Mn(2+) is bound at residue Glu140. Gly192 contributes to the NADPH binding site. The 1-deoxy-D-xylulose 5-phosphate site is built by Ser199, Asn204, Lys205, and Glu208. Residue Glu208 participates in Mn(2+) binding.

It belongs to the DXR family. The cofactor is Mg(2+). Mn(2+) is required as a cofactor.

It catalyses the reaction 2-C-methyl-D-erythritol 4-phosphate + NADP(+) = 1-deoxy-D-xylulose 5-phosphate + NADPH + H(+). The protein operates within isoprenoid biosynthesis; isopentenyl diphosphate biosynthesis via DXP pathway; isopentenyl diphosphate from 1-deoxy-D-xylulose 5-phosphate: step 1/6. Catalyzes the NADPH-dependent rearrangement and reduction of 1-deoxy-D-xylulose-5-phosphate (DXP) to 2-C-methyl-D-erythritol 4-phosphate (MEP). This Thermus thermophilus (strain ATCC BAA-163 / DSM 7039 / HB27) protein is 1-deoxy-D-xylulose 5-phosphate reductoisomerase.